Consider the following 316-residue polypeptide: Olfactory receptor 2K2 (316 aa).

Residues 1-20 (MQGENFTIWSIFFLEGFSQY) lie on the Extracellular side of the membrane. N-linked (GlcNAc...) asparagine glycosylation occurs at Asn5. Residues 21-41 (PGLEVVLFVFSLVMYLTTLLG) form a helical membrane-spanning segment. The Cytoplasmic portion of the chain corresponds to 42-65 (NSTLILITILDSRLKTPMYLFLGN). Residues 66-86 (LSFMDICYTSASVPTLLVNLL) traverse the membrane as a helical segment. Over 87 to 97 (SSQKTIIFSGC) the chain is Extracellular. A disulfide bridge connects residues Cys97 and Cys188. A helical membrane pass occupies residues 98–118 (AVQMYLSLAMGSTECVLLAVM). Residues 119-143 (AYDRYVAICNPLRYSIIMNRCVCAR) are Cytoplasmic-facing. A helical transmembrane segment spans residues 144–164 (MATVSWVTGCLTALLETSFAL). At 165–199 (QIPLCGNLIDHFTCEILAVLKLACTSSLLMNTIML) the chain is on the extracellular side. A helical membrane pass occupies residues 200–220 (VVSILLLPIPMLLVCISYIFI). Residues 221 to 238 (LSTILRITSAEGRNKAFS) are Cytoplasmic-facing. A helical transmembrane segment spans residues 239-259 (TCGAHLTVVILYYGAALSMYL). The Extracellular segment spans residues 260–270 (KPSSSNAQKID). The helical transmembrane segment at 271–291 (KIISLLYGVLTPMLNPIIYSL) threads the bilayer. Over 292 to 316 (RNKEVKDAMKKLLGKITLHQTHEHL) the chain is Cytoplasmic.

This sequence belongs to the G-protein coupled receptor 1 family.

It localises to the cell membrane. Functionally, odorant receptor. This is Olfactory receptor 2K2 (OR2K2) from Homo sapiens (Human).